The sequence spans 132 residues: DNA-directed RNA polymerase subunit omega (132 aa).

The disordered stretch occupies residues 76 to 105; sequence EVDEPEQDAASIAEGQLTSGSQDEDEMPET.

Belongs to the RNA polymerase subunit omega family. As to quaternary structure, the RNAP catalytic core consists of 2 alpha, 1 beta, 1 beta' and 1 omega subunit. When a sigma factor is associated with the core the holoenzyme is formed, which can initiate transcription.

The catalysed reaction is RNA(n) + a ribonucleoside 5'-triphosphate = RNA(n+1) + diphosphate. In terms of biological role, promotes RNA polymerase assembly. Latches the N- and C-terminal regions of the beta' subunit thereby facilitating its interaction with the beta and alpha subunits. The protein is DNA-directed RNA polymerase subunit omega of Allorhizobium ampelinum (strain ATCC BAA-846 / DSM 112012 / S4) (Agrobacterium vitis (strain S4)).